The primary structure comprises 152 residues: Cytochrome c-type biogenesis CcmH-like mitochondrial protein (152 aa).

At 1–83 (MATEEDVKQR…ILYTPKFDLQ (83 aa)) the chain is on the mitochondrial intermembrane side. 2 residues coordinate heme: cysteine 26 and cysteine 29. The helical transmembrane segment at 84–104 (TAAIWLSPVIVGGVAAGVWAY) threads the bilayer. Over 105–152 (KKHRQRTNVHIMALNLVRGVPLTPREKETMLDVLTPPPPANKWWWPGK) the chain is Mitochondrial matrix.

This sequence belongs to the CcmH/CycL/Ccl2/NrfF family.

It is found in the mitochondrion inner membrane. Plays a role in mitochondrial cytochrome c maturation. Probable component of a heme lyase complex involved in the reduction of apocytochrome c. The protein is Cytochrome c-type biogenesis CcmH-like mitochondrial protein of Oryza sativa subsp. indica (Rice).